The primary structure comprises 311 residues: Acetyl-coenzyme A carboxylase carboxyl transferase subunit beta (311 aa).

The region spanning Leu-32–Pro-299 is the CoA carboxyltransferase N-terminal domain. The tract at residues Ser-291–His-311 is disordered.

The protein belongs to the AccD/PCCB family. As to quaternary structure, acetyl-CoA carboxylase is a heterohexamer composed of biotin carboxyl carrier protein (AccB), biotin carboxylase (AccC) and two subunits each of ACCase subunit alpha (AccA) and ACCase subunit beta (AccD).

Its subcellular location is the cytoplasm. It catalyses the reaction N(6)-carboxybiotinyl-L-lysyl-[protein] + acetyl-CoA = N(6)-biotinyl-L-lysyl-[protein] + malonyl-CoA. The protein operates within lipid metabolism; malonyl-CoA biosynthesis; malonyl-CoA from acetyl-CoA: step 1/1. Functionally, component of the acetyl coenzyme A carboxylase (ACC) complex. Biotin carboxylase (BC) catalyzes the carboxylation of biotin on its carrier protein (BCCP) and then the CO(2) group is transferred by the transcarboxylase to acetyl-CoA to form malonyl-CoA. The protein is Acetyl-coenzyme A carboxylase carboxyl transferase subunit beta of Maricaulis maris (strain MCS10) (Caulobacter maris).